Reading from the N-terminus, the 276-residue chain is NAC domain-containing protein 67 (276 aa).

The NAC domain occupies 17-170 (LPPGFRFHPT…DWVLCRLYNK (154 aa)).

In terms of tissue distribution, expressed in leaf blades.

The protein localises to the nucleus. Probable transcription factor involved in stress response. This Oryza sativa subsp. japonica (Rice) protein is NAC domain-containing protein 67.